A 199-amino-acid polypeptide reads, in one-letter code: Probable GTP-binding protein EngB (199 aa).

One can recognise an EngB-type G domain in the interval 21-195 (IYTEIAFLGR…EQKIILESLG (175 aa)). GTP-binding positions include 29–36 (GRSNVGKS), 56–60 (GKTQL), 81–84 (DLPG), 151–154 (TKAD), and 174–176 (VSN). Residues S36 and T58 each coordinate Mg(2+).

The protein belongs to the TRAFAC class TrmE-Era-EngA-EngB-Septin-like GTPase superfamily. EngB GTPase family. Mg(2+) serves as cofactor.

Its function is as follows. Necessary for normal cell division and for the maintenance of normal septation. The chain is Probable GTP-binding protein EngB from Campylobacter lari (strain RM2100 / D67 / ATCC BAA-1060).